A 330-amino-acid chain; its full sequence is Probable cytosolic iron-sulfur protein assembly protein ciao1-A (330 aa).

WD repeat units lie at residues 14-53 (HPDSRCWYVAWNPKGTLLASCGGDRAIRIWGREGDSWECK), 59-98 (GHQRAVRKVAWSPCGNYLASASFDATTCIWKKKNDDFECL), 103-142 (GHENEVKCVAWAPSGNQLATCSRDKSVWIWEVDEEDEYEC), 148-187 (SHTQDVKHVVWHPTQELLASCSYDNNVCVYKEEDDDWECR), 192-231 (GHTSTVWGLTFDPSGQRLASCSDDRTVKIWKECQPGGGQD), 243-282 (FHGRTVYDIAWCPLTGALATACGDDGVRVFKEDETADPDQ), and 294-330 (AHSQDVNCIAWHPKEAGLLVSCSDNGEIAVWNYQSEV).

The protein belongs to the WD repeat CIA1 family. As to quaternary structure, component of the CIA complex.

Its function is as follows. Key component of the cytosolic iron-sulfur protein assembly (CIA) complex, a multiprotein complex that mediates the incorporation of iron-sulfur cluster into extramitochondrial Fe/S proteins. This Salmo salar (Atlantic salmon) protein is Probable cytosolic iron-sulfur protein assembly protein ciao1-A (ciao1a).